The sequence spans 122 residues: Small ribosomal subunit protein uS13 (122 aa).

A disordered region spans residues 94 to 122 (KQLPVRGQRTHTNARTRKGKAKPIAGKKK).

It belongs to the universal ribosomal protein uS13 family. Part of the 30S ribosomal subunit. Forms a loose heterodimer with protein S19. Forms two bridges to the 50S subunit in the 70S ribosome.

Functionally, located at the top of the head of the 30S subunit, it contacts several helices of the 16S rRNA. In the 70S ribosome it contacts the 23S rRNA (bridge B1a) and protein L5 of the 50S subunit (bridge B1b), connecting the 2 subunits; these bridges are implicated in subunit movement. Contacts the tRNAs in the A and P-sites. This chain is Small ribosomal subunit protein uS13, found in Methylorubrum extorquens (strain PA1) (Methylobacterium extorquens).